A 93-amino-acid polypeptide reads, in one-letter code: UPF0367 protein gsr3177 (93 aa).

This sequence belongs to the UPF0367 family.

This Gloeobacter violaceus (strain ATCC 29082 / PCC 7421) protein is UPF0367 protein gsr3177.